The sequence spans 687 residues: MVVFPKSLSPKHVLKLLKSEKNPRAAFALFDSATRHPGYAHSAVVYHHILRRLSETRMVNHVSRIVELIRSQECKCDEDVALSVIKTYGKNSMPDQALDVFKRMREIFGCEPAIRSYNTLLNAFVEAKQWVKVESLFAYFETAGVAPNLQTYNVLIKMSCKKKEFEKARGFLDWMWKEGFKPDVFSYSTVINDLAKAGKLDDALELFDEMSERGVAPDVTCYNILIDGFLKEKDHKTAMELWDRLLEDSSVYPNVKTHNIMISGLSKCGRVDDCLKIWERMKQNEREKDLYTYSSLIHGLCDAGNVDKAESVFNELDERKASIDVVTYNTMLGGFCRCGKIKESLELWRIMEHKNSVNIVSYNILIKGLLENGKIDEATMIWRLMPAKGYAADKTTYGIFIHGLCVNGYVNKALGVMQEVESSGGHLDVYAYASIIDCLCKKKRLEEASNLVKEMSKHGVELNSHVCNALIGGLIRDSRLGEASFFLREMGKNGCRPTVVSYNILICGLCKAGKFGEASAFVKEMLENGWKPDLKTYSILLCGLCRDRKIDLALELWHQFLQSGLETDVMMHNILIHGLCSVGKLDDAMTVMANMEHRNCTANLVTYNTLMEGFFKVGDSNRATVIWGYMYKMGLQPDIISYNTIMKGLCMCRGVSYAMEFFDDARNHGIFPTVYTWNILVRAVVNR.

18 PPR repeats span residues Ser42–Cys76, Asp77–Ile107, Ala113–Pro147, Asn148–Pro182, Asp183–Pro217, Asp218–Pro253, Asn254–Lys288, Asp289–Ile323, Asp324–Asn358, Ile359–Ala392, Asp393–Leu427, Asp428–Leu462, Asn463–Pro497, Thr498–Pro532, Asp533–Thr567, Asp568–Ala602, Asn603–Pro637, and Asp638–Pro672.

This sequence belongs to the PPR family. P subfamily.

In Arabidopsis thaliana (Mouse-ear cress), this protein is Pentatricopeptide repeat-containing protein At3g09060.